Consider the following 302-residue polypeptide: MDPKRLTHLKQLEAESIHILREVAAEFDNPVMMYSIGKDSSVMLHLARKAFYPGKIPFPLLHVDTDWKFREMIEFRDRTAEKYGFELLVHKNPEGMAMGISPFEHGSSKHTDVMKTQGLKQALNKYGFDAAFGGARRDEEKSRAKERIYSFRDKNHSWDPKNQRPELWKTYNGQINKGESIRVFPLSNWTELDIWQYIYLESIEIVPLYLSDIRPVVERDGMLIMADDDRLKLQPGEKIEYKSVRFRTLGCYPLTGAIESKADTLPGIIEEMLVATSSERQGRAIDHDQSGSMELKKRQGYF.

The tract at residues Glu279–Phe302 is disordered. A compositionally biased stretch (basic and acidic residues) spans Arg280 to Phe302.

Belongs to the PAPS reductase family. CysD subfamily. As to quaternary structure, heterodimer composed of CysD, the smaller subunit, and CysN.

It catalyses the reaction sulfate + ATP + H(+) = adenosine 5'-phosphosulfate + diphosphate. Its pathway is sulfur metabolism; hydrogen sulfide biosynthesis; sulfite from sulfate: step 1/3. With CysN forms the ATP sulfurylase (ATPS) that catalyzes the adenylation of sulfate producing adenosine 5'-phosphosulfate (APS) and diphosphate, the first enzymatic step in sulfur assimilation pathway. APS synthesis involves the formation of a high-energy phosphoric-sulfuric acid anhydride bond driven by GTP hydrolysis by CysN coupled to ATP hydrolysis by CysD. This is Sulfate adenylyltransferase subunit 2 from Photobacterium profundum (strain SS9).